Reading from the N-terminus, the 312-residue chain is MIVEVFFRNFYRNFAKFEIDAVDKREFAFQPFSGGMVRHKSFKSLEDLRKFVVEKTPRHIYHSAAYYERPGEEDMERKGWIGADLIFDIDGDHLDTEACRESKIVSLRCLEDAREEANKLIDVLIQELDLKPTRIVFSGNRGFHIHVSSEEVMKLGSRERRELVNYLKAVGFDPSRFIAKLGRRKVVLYEEEAVGNLLRIKQGVEDARAMKVEIDEVVTQDIHRLIRAPGSLNGKTGLVALPISLKELDKGVEYIVDKAIAFRKGHLKFKFEKPVEGPVLFEKVGGREGDVKVLPAYVAIYLELQEFGKIYD.

Active-site residues include Asp-88, Asp-90, and Asp-215.

Belongs to the eukaryotic-type primase small subunit family. Heterodimer of a small subunit (PriS) and a large subunit (PriL). The cofactor is Mg(2+). It depends on Mn(2+) as a cofactor.

Its function is as follows. Catalytic subunit of DNA primase, an RNA polymerase that catalyzes the synthesis of short RNA molecules used as primers for DNA polymerase during DNA replication. The small subunit contains the primase catalytic core and has DNA synthesis activity on its own. Binding to the large subunit stabilizes and modulates the activity, increasing the rate of DNA synthesis while decreasing the length of the DNA fragments, and conferring RNA synthesis capability. The DNA polymerase activity may enable DNA primase to also catalyze primer extension after primer synthesis. May also play a role in DNA repair. The sequence is that of DNA primase small subunit PriS from Pyrobaculum aerophilum (strain ATCC 51768 / DSM 7523 / JCM 9630 / CIP 104966 / NBRC 100827 / IM2).